The primary structure comprises 154 residues: Prefoldin subunit alpha (154 aa).

This sequence belongs to the prefoldin alpha subunit family. As to quaternary structure, heterohexamer of two alpha and four beta subunits.

Its subcellular location is the cytoplasm. Functionally, molecular chaperone capable of stabilizing a range of proteins. Seems to fulfill an ATP-independent, HSP70-like function in archaeal de novo protein folding. In Hyperthermus butylicus (strain DSM 5456 / JCM 9403 / PLM1-5), this protein is Prefoldin subunit alpha.